A 77-amino-acid chain; its full sequence is Conotoxin G11.1 (77 aa).

Residues 1–20 (MKLFLAIVLILMLQFLSTGA) form the signal peptide. Residues 21–45 (ETSDNHASRSTTALRDWLLGPKAKR) constitute a propeptide that is removed on maturation. Intrachain disulfides connect cysteine 46/cysteine 60, cysteine 53/cysteine 65, cysteine 59/cysteine 69, and cysteine 64/cysteine 76.

The protein belongs to the conotoxin I3 superfamily. Expressed by the venom duct.

It localises to the secreted. Its function is as follows. May embed in the membrane and bind to the voltage sensor domain of a ion channel. Does not induce paralysis when injected in fish, leading to the hypothesis that it may be part of the sedative nirvana cabal. The chain is Conotoxin G11.1 from Conus geographus (Geography cone).